The sequence spans 59 residues: Inner kinetochore subunit fta6 (59 aa).

In terms of assembly, component of the inner kinetochore constitutive centromere-associated network (CCAN) (also known as central kinetochore Sim4 complex in fission yeast), which is composed of at least cnl2, cnp3, cnp20, fta1, fta2, fta3, fta4, fta6, fta7, mal2, mhf1, mhf2, mis6, mis15, mis17, sim4 and wip1.

Its subcellular location is the nucleus. The protein localises to the chromosome. It is found in the centromere. The protein resides in the kinetochore. It localises to the cytoplasm. Its subcellular location is the cytoskeleton. The protein localises to the microtubule organizing center. It is found in the spindle pole body. Its function is as follows. Component of the kinetochore, a multiprotein complex that assembles on centromeric DNA and attaches chromosomes to spindle microtubules, mediating chromosome segregation and sister chromatid segregation during meiosis and mitosis. Component of the inner kinetochore constitutive centromere-associated network (CCAN), which serves as a structural platform for outer kinetochore assembly. The chain is Inner kinetochore subunit fta6 (fta6) from Schizosaccharomyces pombe (strain 972 / ATCC 24843) (Fission yeast).